Reading from the N-terminus, the 198-residue chain is Superoxide dismutase [Fe] (198 aa).

The Fe cation site is built by His-27, His-74, Asp-158, and His-162.

It belongs to the iron/manganese superoxide dismutase family. In terms of assembly, homodimer. Requires Fe cation as cofactor.

It is found in the cytoplasm. It carries out the reaction 2 superoxide + 2 H(+) = H2O2 + O2. Destroys superoxide anion radicals which are normally produced within the cells and which are toxic to biological systems. The chain is Superoxide dismutase [Fe] (SODB) from Plasmodium falciparum (isolate HB3).